A 132-amino-acid polypeptide reads, in one-letter code: UPF0102 protein Acel_1550 (132 aa).

It belongs to the UPF0102 family.

In Acidothermus cellulolyticus (strain ATCC 43068 / DSM 8971 / 11B), this protein is UPF0102 protein Acel_1550.